The chain runs to 245 residues: Orotidine 5'-phosphate decarboxylase (245 aa).

Residues Asp-22, Lys-44, Asp-71–Thr-80, Thr-131, Arg-192, Gln-201, Gly-221, and Arg-222 each bind substrate. Lys-73 (proton donor) is an active-site residue.

Belongs to the OMP decarboxylase family. Type 1 subfamily. As to quaternary structure, homodimer.

It carries out the reaction orotidine 5'-phosphate + H(+) = UMP + CO2. It participates in pyrimidine metabolism; UMP biosynthesis via de novo pathway; UMP from orotate: step 2/2. Catalyzes the decarboxylation of orotidine 5'-monophosphate (OMP) to uridine 5'-monophosphate (UMP). The polypeptide is Orotidine 5'-phosphate decarboxylase (Klebsiella pneumoniae (strain 342)).